Reading from the N-terminus, the 484-residue chain is Glycogen synthase 2 (484 aa).

Lys15 contacts ADP-alpha-D-glucose.

Belongs to the glycosyltransferase 1 family. Bacterial/plant glycogen synthase subfamily.

It carries out the reaction [(1-&gt;4)-alpha-D-glucosyl](n) + ADP-alpha-D-glucose = [(1-&gt;4)-alpha-D-glucosyl](n+1) + ADP + H(+). It participates in glycan biosynthesis; glycogen biosynthesis. Functionally, synthesizes alpha-1,4-glucan chains using ADP-glucose. The chain is Glycogen synthase 2 from Geobacter metallireducens (strain ATCC 53774 / DSM 7210 / GS-15).